The chain runs to 880 residues: Alanine--tRNA ligase (880 aa).

Positions 568, 572, 670, and 674 each coordinate Zn(2+).

Belongs to the class-II aminoacyl-tRNA synthetase family. The cofactor is Zn(2+).

It localises to the cytoplasm. The enzyme catalyses tRNA(Ala) + L-alanine + ATP = L-alanyl-tRNA(Ala) + AMP + diphosphate. Catalyzes the attachment of alanine to tRNA(Ala) in a two-step reaction: alanine is first activated by ATP to form Ala-AMP and then transferred to the acceptor end of tRNA(Ala). Also edits incorrectly charged Ser-tRNA(Ala) and Gly-tRNA(Ala) via its editing domain. The polypeptide is Alanine--tRNA ligase (Ligilactobacillus salivarius (strain UCC118) (Lactobacillus salivarius)).